The following is a 714-amino-acid chain: Glutamine-dependent NAD(+) synthetase (714 aa).

Residues 5 to 275 (ITLATCNLNQ…VEVVTATVDL (271 aa)) enclose the CN hydrolase domain. Glu-45 functions as the Proton acceptor; for glutaminase activity in the catalytic mechanism. Residue Lys-114 is the For glutaminase activity of the active site. Cys-175 functions as the Nucleophile; for glutaminase activity in the catalytic mechanism. The segment at 329–714 (YHSPEEEIAL…GSTLDIMSID (386 aa)) is ligase. An ATP-binding site is contributed by 359 to 366 (PLSGGIDS). The active site involves Ser-361.

It in the C-terminal section; belongs to the NAD synthetase family.

The enzyme catalyses deamido-NAD(+) + L-glutamine + ATP + H2O = L-glutamate + AMP + diphosphate + NAD(+) + H(+). It functions in the pathway cofactor biosynthesis; NAD(+) biosynthesis; NAD(+) from deamido-NAD(+) (L-Gln route): step 1/1. The chain is Glutamine-dependent NAD(+) synthetase (QNS1) from Saccharomyces cerevisiae (strain ATCC 204508 / S288c) (Baker's yeast).